The primary structure comprises 514 residues: Na(+)/H(+) antiporter NhaB (514 aa).

A run of 12 helical transmembrane segments spans residues 23 to 43 (LALLVFLIVNPFIFLANPFVA), 63 to 83 (PLLPGGLLAIEAVIIGMTSAA), 97 to 117 (LLLMFMVAGIYFMKQLLLFIF), 120 to 140 (LLLSIRSKMVLSLAFCVAAAF), 144 to 164 (FLDALTVVAVVISVAVGFYGI), 202 to 222 (LMMHAGVGTALGGVMTMVGEP), 238 to 258 (FFLRMSPVTVPVLVCGLLTCM), 303 to 323 (AVIGVWLVTALALHLAEVGLI), 357 to 377 (LTVFFSIVAVIIDQHLFAPII), 391 to 411 (LFYLFNGLLSSISDNVFVGTI), 447 to 467 (ATPNGQAAFLFLLTSALAPLI), and 475 to 495 (VWMALPYTIVLTLIGLLCVEF).

Belongs to the NhaB Na(+)/H(+) (TC 2.A.34) antiporter family.

It is found in the cell inner membrane. The enzyme catalyses 2 Na(+)(in) + 3 H(+)(out) = 2 Na(+)(out) + 3 H(+)(in). Its function is as follows. Na(+)/H(+) antiporter that extrudes sodium in exchange for external protons. The polypeptide is Na(+)/H(+) antiporter NhaB (Salmonella paratyphi A (strain ATCC 9150 / SARB42)).